The following is a 191-amino-acid chain: Probable GTP-binding protein EngB (191 aa).

The EngB-type G domain maps to 13–189; the sequence is DRLEVAFAGR…RAEIVALLPD (177 aa). GTP contacts are provided by residues 21–28, 48–52, 67–70, 134–137, and 168–170; these read GRSNVGKS, GRTRE, DLPG, TKTD, and TSS. The Mg(2+) site is built by serine 28 and threonine 50.

Belongs to the TRAFAC class TrmE-Era-EngA-EngB-Septin-like GTPase superfamily. EngB GTPase family. Requires Mg(2+) as cofactor.

Necessary for normal cell division and for the maintenance of normal septation. This chain is Probable GTP-binding protein EngB, found in Maricaulis maris (strain MCS10) (Caulobacter maris).